The sequence spans 198 residues: Recombination protein RecR (198 aa).

The segment at 56–71 (CKVCGNFSEEDECVIC) adopts a C4-type zinc-finger fold. The region spanning 79-174 (GVICVVEEPK…RVSKLASGLP (96 aa)) is the Toprim domain.

It belongs to the RecR family.

Its function is as follows. May play a role in DNA repair. It seems to be involved in an RecBC-independent recombinational process of DNA repair. It may act with RecF and RecO. In Tropheryma whipplei (strain TW08/27) (Whipple's bacillus), this protein is Recombination protein RecR.